A 225-amino-acid polypeptide reads, in one-letter code: MMYHIPGVLSPQDVARFREQLEQAEWVDGRITTGAQGAQVKNNQQVDTRSTLYAALQNEVLNAVNQNALFFAAALPRTLSTPLFNRYQNNETYGFHVDGAVRSHPQNGWMRTDLSATLFLSDPQSYDGGELVVNDTFGQHRVKLPAGDLVLYPSSSLHCVTPVTRGVRVASFMWIQSMIRDDKKRAMLFELDNNIQSLKSRYGESEEILSLLNLYHNLLREWSEI.

The 100-residue stretch at 78–177 folds into the Fe2OG dioxygenase domain; that stretch reads TLSTPLFNRY…RVASFMWIQS (100 aa). Residues H96, D98, and H158 each contribute to the Fe cation site. Residue R168 coordinates 2-oxoglutarate.

It depends on Fe(2+) as a cofactor. Requires L-ascorbate as cofactor.

The sequence is that of PKHD-type hydroxylase YbiX from Escherichia coli (strain 55989 / EAEC).